We begin with the raw amino-acid sequence, 434 residues long: MGKEKPHINLVVIGHVVAGKSTTTGHLIYACGGIDKRTIERFEEGGQRIGKGSFKYAWVLAKMKAERERGITIDISLWKFETRKDFFTIIDAPGHRDFIKNMITGTSQADVAILVIASGAGEFEAGYSKNGQTREHALLANTLGVKQMIVCCNKMDDKSVNYSEARYKEIKNEMTSFLTKVGYAKVEERIPFIPISGFNGDNMIEHSANMPWYKGPTLLEALDNVHPPKRPVDKPLRLPLQDVYKIGGIGTVPVGRVETGVLKPGMTVTFAPVNVSTEVKSVEMHHESIPQALPGDNVGFNVNNVSVEDIHRGNVCGDAKNDPPCKTESDAQVIVMNHPSGIRPGYCPVVDCHTAHIACKFEKIMSEMDKRTGKVLRENPDIVKNGKSMMAQLVPSKPMCVETFSDYPPLGRFAVRDMRQTVAVGIIKSTVRAK.

The tr-type G domain occupies 5–232; the sequence is KPHINLVVIG…DNVHPPKRPV (228 aa). Positions 14–21 are G1; sequence GHVVAGKS. Residue 14-21 coordinates GTP; the sequence is GHVVAGKS. A G2 region spans residues 70–74; that stretch reads GITID. The segment at 91 to 94 is G3; sequence DAPG. Residues 91-95 and 153-156 contribute to the GTP site; these read DAPGH and NKMD. A G4 region spans residues 153 to 156; that stretch reads NKMD. Residues 196 to 198 form a G5 region; it reads SGF.

This sequence belongs to the TRAFAC class translation factor GTPase superfamily. Classic translation factor GTPase family. EF-Tu/EF-1A subfamily.

The protein resides in the cytoplasm. This protein promotes the GTP-dependent binding of aminoacyl-tRNA to the A-site of ribosomes during protein biosynthesis. The polypeptide is Elongation factor 1-alpha (Blastocystis hominis).